Here is a 113-residue protein sequence, read N- to C-terminus: MNTVRVAFLLVFVLAVSLGQADKDENRMEMQEKTEQGKSYLDFAENLLLQKLEEPEAKLLEEDSEESRNSRQKRCIGEGVPCDENDPRCCSGLVCLKPTLHGIWYKSYYCYKK.

The first 21 residues, 1-21 (MNTVRVAFLLVFVLAVSLGQA), serve as a signal peptide directing secretion. A propeptide spanning residues 22–74 (DKDENRMEMQEKTEQGKSYLDFAENLLLQKLEEPEAKLLEEDSEESRNSRQKR) is cleaved from the precursor. The segment covering 58-69 (KLLEEDSEESRN) has biased composition (basic and acidic residues). A disordered region spans residues 58–83 (KLLEEDSEESRNSRQKRCIGEGVPCD). Disulfide bonds link Cys75–Cys90, Cys82–Cys95, and Cys89–Cys110.

The protein belongs to the neurotoxin 14 (magi-1) family. 01 (HNTX-16) subfamily. Expressed by the venom gland.

Its subcellular location is the secreted. In terms of biological role, probable ion channel inhibitor. This is U11-theraphotoxin-Hhn1a from Cyriopagopus hainanus (Chinese bird spider).